Here is a 106-residue protein sequence, read N- to C-terminus: Putative double-stranded DNA mimic protein VIBHAR_02752 (106 aa).

This sequence belongs to the putative dsDNA mimic protein family.

May act as a double-stranded DNA (dsDNA) mimic. Probably regulates the activity of a dsDNA-binding protein. This chain is Putative double-stranded DNA mimic protein VIBHAR_02752, found in Vibrio campbellii (strain ATCC BAA-1116).